The chain runs to 1549 residues: MISISKRTSIARINLSEFHTISKIDRYPWLNKEKDACGVGFIAHLDNKFGHKLMMNALEALATMEHRGACSADEESGDGAGILFSIPWKFFVEWSLRYKQFKINISQAAVAMLFLPCLSSDIQVSKNIVEEIFQDEDFIVIGWREVPYVKEVLGPLALRNMPQIYQIVVQSKRYQGRSLDFHLYRVRRKIEKEITVRAYSWAKDFYFCSCSNHTIVYKGMVKSTSLGQFYQDLYNPDFEISFAVFHRRFSTNTMPRWPLAQPMRILGHNGEINTLLGNLKWMEARESSLNHPTLNEVASIGPVVNVSNSDSANLDSVVELFLHVGHSCPEALMFLIPEAYENNPKLKYHQNLISFYEYCAGFQEAWDGPALIVFSDGHTVGASLDRNGLRPARYCVTEDNVLILASEGGVLNLDPSLIRLKGRLGPGEMIVLDLQEKLLMSNLEIKNKIASLRPYSDWIKQNRQVLIPTSFLTSTTLPLQEVFKRQTCFGYTSEDIELVIENMAIQGKEPTFCMGDDTPLAVLSGKSHVLYDYFKQRFAQVTNPPIDSLRESLVMSISSYLGSKTNSFEESSEKILKIKTPILSENDLVLIKNSELLTETLVTTFEAHFDSPQANGQSLFSTINQLCKQAKNLIQAGTKIIILSDKVCFESRTESYIPPLLVVGSLHQYLIKQGVRQKVSLIVETGQCWSTHHFACLLGYGASAVCPYLALETVRHWWMSERTQNLMSKGKMPNLTLIEVQNNYCKSVERGLLKILSKMGISLLTSYIGAQIFEILGLGKEVVDLAFEGTVSRIGGLSFADLAMETIDLCSAGFSKLNKKKLDNHGFVQYRPGGEYHLNNPEMSKALHKAVRENNYTLYEAYKQLLANRPPTNIRDLLEFNFRSCSVPLEKVENIFEITKRFCTGGMSLGALSREAHETLSIAMNRIGGKSNSGEGGEDSLRFTVLTDVDETGNSPSFPHLKGLKNGDSLSSAIKQIASGRFGVTPEYLVNAKQLEIKISQGAKPGEGGQLPGKKVSPYIATLRACKPGVTLISPPPHHDIYSIEDLAQLIFDLHQVNPECKVSVKLVSEIGVGTIAVGVAKAGAEIIQISGHDGGTGASPLSSIKHAGVPWELGLHEVHCLLVENNLREKVILRVDGGLRTGQDVVMAALLGADEYGFGTIAMIAGGCIMARVCHTNSCPVGVATQKEELRMRYPGVPENVVNYFIFLAEEIRVILSKLGFETLSQIIGRKDLINHNFDKKLCKTHCIDTSIFFNIKTNEYNFLEIPGGHSKKLKTSLLDYELLNSSDILYAIDNHKTLEKHIKISNSDRSVGAKLAGRLAKQYKNEGFRGSLILNFYGTAGQSFGSFNIKGVTLRLIGEANDYVGKSMSGGEIVIVPPSEVAFDASEQVILGNTCLYGATGGFLFAYGAAGERFAVRNSNAFSVLEGVGDHACEYMTGGRVVVLGKAGRNIAAGMTGGIAYFLDEYSNLPEKVNLDIVRIQRVVTNEARKQLIQLIEKHVLKTGSKKAVLILQQWEIFIHYFWQIVPPSESETSETNYFVENKVLAN.

The active-site For GATase activity is Cys-37. One can recognise a Glutamine amidotransferase type-2 domain in the interval 37–435 (CGVGFIAHLD…PGEMIVLDLQ (399 aa)). 1116-1173 (LHEVHCLLVENNLREKVILRVDGGLRTGQDVVMAALLGADEYGFGTIAMIAGGCIMAR) serves as a coordination point for FMN. The [3Fe-4S] cluster site is built by Cys-1169, Cys-1175, and Cys-1180.

It belongs to the glutamate synthase family. As to quaternary structure, monomer. Requires [3Fe-4S] cluster as cofactor. FAD is required as a cofactor. FMN serves as cofactor.

The protein resides in the plastid. It localises to the chloroplast stroma. It carries out the reaction 2 oxidized [2Fe-2S]-[ferredoxin] + 2 L-glutamate = L-glutamine + 2 reduced [2Fe-2S]-[ferredoxin] + 2-oxoglutarate + 2 H(+). It functions in the pathway amino-acid biosynthesis; L-glutamate biosynthesis via GLT pathway; L-glutamate from 2-oxoglutarate and L-glutamine (ferredoxin route): step 1/1. The protein operates within energy metabolism; nitrogen metabolism. The polypeptide is Ferredoxin-dependent glutamate synthase (gltB) (Cyanidium caldarium (Red alga)).